Reading from the N-terminus, the 281-residue chain is Nucleotide-binding protein DNO_0399 (281 aa).

6–13 (GMSGAGKS) serves as a coordination point for ATP. GTP is bound at residue 55–58 (DARN).

This sequence belongs to the RapZ-like family.

Displays ATPase and GTPase activities. This chain is Nucleotide-binding protein DNO_0399, found in Dichelobacter nodosus (strain VCS1703A).